Reading from the N-terminus, the 462-residue chain is MSYINFSAIILAAGRGNRMLSDTPKVLYQIGGKFMLQHLIDSVMQVGVSSIYVVHGYKGEMIIKEINTNQYKIPVYWILQHDLTGTGDAVQRVLPFISDDEEVLVLYGDVPFVSYKTLQRLHVIKSQCDISMLTATLPNPKGYGRIVRNQEGSVVSIIEHDDIINDDQKKIKEVSTGIFIAISNHLKCWLSTLTTHKSKNEFYLTDIIQIAHQSGYSIHTMCPDDTFEIMGVNSKSDFVDLDKQYQQRKVQCLLSSGLMIIDPNRFDLRGTLVHGKDVYIDINVIIEGHVSLGNRVKIGASCILKDTIVADDVEIYPFSIIENTTIGFQSKVGPFVRLRPGTELKEKSHVGNFVEIKNTRLGEQSKVKHLSYLGDAEIGNQVNIGAGTIICNYDGMMKHQTIIGDDVFIGADSQLVAPITIGKNVTIGAGTTVTRDVAANETIISRIRQFSILNWKRLKNKK.

The tract at residues 1-235 (MSYINFSAII…TFEIMGVNSK (235 aa)) is pyrophosphorylase. UDP-N-acetyl-alpha-D-glucosamine is bound by residues 11 to 14 (LAAG), K25, Q80, 85 to 86 (GT), 107 to 109 (YGD), G144, E159, and N233. D109 is a Mg(2+) binding site. Residue N233 participates in Mg(2+) binding. A linker region spans residues 236-256 (SDFVDLDKQYQQRKVQCLLSS). The interval 257–462 (GLMIIDPNRF…LNWKRLKNKK (206 aa)) is N-acetyltransferase. UDP-N-acetyl-alpha-D-glucosamine-binding residues include R339 and K357. Residue H369 is the Proton acceptor of the active site. Positions 372 and 383 each coordinate UDP-N-acetyl-alpha-D-glucosamine. Acetyl-CoA contacts are provided by residues A386, 392-393 (NY), A429, and R446.

The protein in the N-terminal section; belongs to the N-acetylglucosamine-1-phosphate uridyltransferase family. It in the C-terminal section; belongs to the transferase hexapeptide repeat family. In terms of assembly, homotrimer. Requires Mg(2+) as cofactor.

The protein localises to the cytoplasm. It carries out the reaction alpha-D-glucosamine 1-phosphate + acetyl-CoA = N-acetyl-alpha-D-glucosamine 1-phosphate + CoA + H(+). It catalyses the reaction N-acetyl-alpha-D-glucosamine 1-phosphate + UTP + H(+) = UDP-N-acetyl-alpha-D-glucosamine + diphosphate. The protein operates within nucleotide-sugar biosynthesis; UDP-N-acetyl-alpha-D-glucosamine biosynthesis; N-acetyl-alpha-D-glucosamine 1-phosphate from alpha-D-glucosamine 6-phosphate (route II): step 2/2. Its pathway is nucleotide-sugar biosynthesis; UDP-N-acetyl-alpha-D-glucosamine biosynthesis; UDP-N-acetyl-alpha-D-glucosamine from N-acetyl-alpha-D-glucosamine 1-phosphate: step 1/1. It functions in the pathway bacterial outer membrane biogenesis; LPS lipid A biosynthesis. Functionally, catalyzes the last two sequential reactions in the de novo biosynthetic pathway for UDP-N-acetylglucosamine (UDP-GlcNAc). The C-terminal domain catalyzes the transfer of acetyl group from acetyl coenzyme A to glucosamine-1-phosphate (GlcN-1-P) to produce N-acetylglucosamine-1-phosphate (GlcNAc-1-P), which is converted into UDP-GlcNAc by the transfer of uridine 5-monophosphate (from uridine 5-triphosphate), a reaction catalyzed by the N-terminal domain. The sequence is that of Bifunctional protein GlmU from Blochmanniella pennsylvanica (strain BPEN).